Consider the following 75-residue polypeptide: Translation initiation factor IF-1 (75 aa).

The S1-like domain occupies 1–75 (MANLPKEQKL…SKGRIVYRFK (75 aa)).

It belongs to the IF-1 family. Component of the 30S ribosomal translation pre-initiation complex which assembles on the 30S ribosome in the order IF-2 and IF-3, IF-1 and N-formylmethionyl-tRNA(fMet); mRNA recruitment can occur at any time during PIC assembly.

The protein localises to the cytoplasm. One of the essential components for the initiation of protein synthesis. Stabilizes the binding of IF-2 and IF-3 on the 30S subunit to which N-formylmethionyl-tRNA(fMet) subsequently binds. Helps modulate mRNA selection, yielding the 30S pre-initiation complex (PIC). Upon addition of the 50S ribosomal subunit IF-1, IF-2 and IF-3 are released leaving the mature 70S translation initiation complex. The protein is Translation initiation factor IF-1 of Mesomycoplasma hyopneumoniae (strain 232) (Mycoplasma hyopneumoniae).